A 412-amino-acid chain; its full sequence is Imidazolonepropionase (412 aa).

Residues H76 and H78 each contribute to the Fe(3+) site. Residues H76 and H78 each contribute to the Zn(2+) site. The 4-imidazolone-5-propanoate site is built by R85, Y148, and H181. Y148 provides a ligand contact to N-formimidoyl-L-glutamate. H242 contributes to the Fe(3+) binding site. Residue H242 participates in Zn(2+) binding. E245 lines the 4-imidazolone-5-propanoate pocket. Residue D317 coordinates Fe(3+). Position 317 (D317) interacts with Zn(2+). Residues N319 and G321 each coordinate N-formimidoyl-L-glutamate. S322 lines the 4-imidazolone-5-propanoate pocket.

It belongs to the metallo-dependent hydrolases superfamily. HutI family. Requires Zn(2+) as cofactor. It depends on Fe(3+) as a cofactor.

Its subcellular location is the cytoplasm. It carries out the reaction 4-imidazolone-5-propanoate + H2O = N-formimidoyl-L-glutamate. The protein operates within amino-acid degradation; L-histidine degradation into L-glutamate; N-formimidoyl-L-glutamate from L-histidine: step 3/3. Catalyzes the hydrolytic cleavage of the carbon-nitrogen bond in imidazolone-5-propanoate to yield N-formimidoyl-L-glutamate. It is the third step in the universal histidine degradation pathway. This is Imidazolonepropionase from Staphylococcus aureus (strain MSSA476).